The chain runs to 63 residues: Conotoxin Vi5.1b (63 aa).

An N-terminal signal peptide occupies residues 1–22 (MLCVPVFIILFIIIPFAPTSES). Positions 23–50 (QPKTKEEVAKASVHDNAERTLQRLWNQS) are excised as a propeptide. The residue at position 62 (Pro-62) is a Proline amide.

This sequence belongs to the conotoxin T superfamily. In terms of processing, contains 2 disulfide bonds that can be either 'C1-C3, C2-C4' or 'C1-C4, C2-C3', since these disulfide connectivities have been observed for conotoxins with cysteine framework V (for examples, see AC P0DQQ7 and AC P81755). As to expression, expressed by the venom duct.

It localises to the secreted. This is Conotoxin Vi5.1b from Conus virgo (Virgin cone).